We begin with the raw amino-acid sequence, 577 residues long: Type I restriction enzyme MjaVII methylase subunit (577 aa).

S-adenosyl-L-methionine is bound by residues 251–256, 281–283, Glu306, and 335–336; these read EVYTPV, SGT, and DS.

This sequence belongs to the N4/N6-methyltransferase family. The type I restriction/modification system is composed of three polypeptides R, M and S.

It carries out the reaction a 2'-deoxyadenosine in DNA + S-adenosyl-L-methionine = an N(6)-methyl-2'-deoxyadenosine in DNA + S-adenosyl-L-homocysteine + H(+). In terms of biological role, the subtype gamma methyltransferase (M) subunit of a type I restriction enzyme. The M and S subunits together form a methyltransferase (MTase) that methylates A-3 on the top and bottom strands of the sequence 5'-CAAN(7)TGG-3'. In the presence of the R subunit the complex can also act as an endonuclease, binding to the same target sequence but cutting the DNA some distance from this site. Whether the DNA is cut or modified depends on the methylation state of the target sequence. When the target site is unmodified, the DNA is cut. When the target site is hemimethylated, the complex acts as a maintenance MTase modifying the DNA so that both strands become methylated. After locating a non-methylated recognition site, the enzyme complex serves as a molecular motor that translocates DNA in an ATP-dependent manner until a collision occurs that triggers cleavage. This chain is Type I restriction enzyme MjaVII methylase subunit, found in Methanocaldococcus jannaschii (strain ATCC 43067 / DSM 2661 / JAL-1 / JCM 10045 / NBRC 100440) (Methanococcus jannaschii).